A 214-amino-acid chain; its full sequence is ATP phosphoribosyltransferase (214 aa).

This sequence belongs to the ATP phosphoribosyltransferase family. Short subfamily. As to quaternary structure, heteromultimer composed of HisG and HisZ subunits.

The protein localises to the cytoplasm. The catalysed reaction is 1-(5-phospho-beta-D-ribosyl)-ATP + diphosphate = 5-phospho-alpha-D-ribose 1-diphosphate + ATP. It participates in amino-acid biosynthesis; L-histidine biosynthesis; L-histidine from 5-phospho-alpha-D-ribose 1-diphosphate: step 1/9. Functionally, catalyzes the condensation of ATP and 5-phosphoribose 1-diphosphate to form N'-(5'-phosphoribosyl)-ATP (PR-ATP). Has a crucial role in the pathway because the rate of histidine biosynthesis seems to be controlled primarily by regulation of HisG enzymatic activity. This is ATP phosphoribosyltransferase from Leptothrix cholodnii (strain ATCC 51168 / LMG 8142 / SP-6) (Leptothrix discophora (strain SP-6)).